Reading from the N-terminus, the 445-residue chain is Argininosuccinate synthase (445 aa).

ATP is bound by residues 17 to 25 (AFSGGLDTS) and A43. Y99 provides a ligand contact to L-citrulline. The ATP site is built by G129 and T131. Positions 131, 135, and 136 each coordinate L-aspartate. N135 serves as a coordination point for L-citrulline. Position 136 (D136) interacts with ATP. 2 residues coordinate L-citrulline: R139 and S192. Position 194 (D194) interacts with ATP. Positions 201, 203, and 280 each coordinate L-citrulline.

Belongs to the argininosuccinate synthase family. Type 2 subfamily. As to quaternary structure, homotetramer.

The protein localises to the cytoplasm. The catalysed reaction is L-citrulline + L-aspartate + ATP = 2-(N(omega)-L-arginino)succinate + AMP + diphosphate + H(+). Its pathway is amino-acid biosynthesis; L-arginine biosynthesis; L-arginine from L-ornithine and carbamoyl phosphate: step 2/3. This is Argininosuccinate synthase from Herminiimonas arsenicoxydans.